The following is a 352-amino-acid chain: Transcription factor RSL2 (352 aa).

The span at 160-169 (SVTTTKSLTG) shows a compositional bias: polar residues. The disordered stretch occupies residues 160-277 (SVTTTKSLTG…ASRGAATDPQ (118 aa)). Positions 183 to 192 (KRARVNKRAQ) are enriched in basic residues. Polar residues predominate over residues 223 to 232 (SRQNSSTTFC). The interval 272–285 (AATDPQSLYARKRR) is basic motif. The bHLH domain occupies 272–321 (AATDPQSLYARKRRERINERLRILQNLVPNGTKVDISTMLEEAVHYVKFL). A helix-loop-helix motif region spans residues 286–321 (ERINERLRILQNLVPNGTKVDISTMLEEAVHYVKFL).

Homodimer. In terms of tissue distribution, expressed in roots. Expressed in root epidermal hair cells.

The protein resides in the nucleus. Functionally, transcription factor involved in the regulation of root hair elongation. Does not seem to be a direct transcriptional target of RHD6 and RSL1. Involved in the regulation of root hair elongation in response to low phosphate. This Arabidopsis thaliana (Mouse-ear cress) protein is Transcription factor RSL2.